Reading from the N-terminus, the 66-residue chain is Large ribosomal subunit protein bL33c (66 aa).

It belongs to the bacterial ribosomal protein bL33 family.

It localises to the plastid. It is found in the chloroplast. The chain is Large ribosomal subunit protein bL33c from Lepidium virginicum (Virginia pepperweed).